The chain runs to 209 residues: Nascent polypeptide-associated complex subunit alpha-like protein 5 (209 aa).

Positions 23–71 (EKEDDVVVEDVKDGEEEDDDEDDEDVEVEGEGGNENAKQSRSEKKSRKA) are disordered. The span at 25 to 54 (EDDVVVEDVKDGEEEDDDEDDEDVEVEGEG) shows a compositional bias: acidic residues. The NAC-A/B domain maps to 62–127 (SRSEKKSRKA…AKVDDLSSQL (66 aa)). One can recognise a UBA domain in the interval 170-207 (VEARDIDLVMTQAGVSKAKAVSALKANDGDIVSAIMEL).

This sequence belongs to the NAC-alpha family.

Its function is as follows. May promote appropriate targeting of ribosome-nascent polypeptide complexes. The sequence is that of Nascent polypeptide-associated complex subunit alpha-like protein 5 from Arabidopsis thaliana (Mouse-ear cress).